The following is a 65-amino-acid chain: Large ribosomal subunit protein bL35 (65 aa).

Belongs to the bacterial ribosomal protein bL35 family.

The sequence is that of Large ribosomal subunit protein bL35 from Thermotoga petrophila (strain ATCC BAA-488 / DSM 13995 / JCM 10881 / RKU-1).